The sequence spans 278 residues: Ribosomal RNA small subunit methyltransferase A (278 aa).

S-adenosyl-L-methionine is bound by residues asparagine 28, leucine 30, glycine 55, glutamate 77, aspartate 103, and asparagine 122.

The protein belongs to the class I-like SAM-binding methyltransferase superfamily. rRNA adenine N(6)-methyltransferase family. RsmA subfamily.

The protein localises to the cytoplasm. The catalysed reaction is adenosine(1518)/adenosine(1519) in 16S rRNA + 4 S-adenosyl-L-methionine = N(6)-dimethyladenosine(1518)/N(6)-dimethyladenosine(1519) in 16S rRNA + 4 S-adenosyl-L-homocysteine + 4 H(+). In terms of biological role, specifically dimethylates two adjacent adenosines (A1518 and A1519) in the loop of a conserved hairpin near the 3'-end of 16S rRNA in the 30S particle. May play a critical role in biogenesis of 30S subunits. The protein is Ribosomal RNA small subunit methyltransferase A of Cereibacter sphaeroides (strain ATCC 17025 / ATH 2.4.3) (Rhodobacter sphaeroides).